We begin with the raw amino-acid sequence, 263 residues long: Small ribosomal subunit protein bS1c (263 aa).

S1 motif domains lie at 27 to 96, 114 to 178, and 192 to 260; these read GDIV…LSIR, DSLL…LSHR, and GNII…LSMK.

The protein belongs to the bacterial ribosomal protein bS1 family.

Its subcellular location is the plastid. It localises to the chloroplast. The chain is Small ribosomal subunit protein bS1c (rps1) from Pyropia yezoensis (Susabi-nori).